Here is a 247-residue protein sequence, read N- to C-terminus: ATP synthase subunit a, chloroplastic (247 aa).

5 consecutive transmembrane segments (helical) span residues 38-58, 95-115, 134-154, 199-219, and 220-240; these read QVLI…IIAV, VPFI…GALL, INTT…AGLS, LVVV…VMFL, and GLFT…AYIG.

It belongs to the ATPase A chain family. As to quaternary structure, F-type ATPases have 2 components, CF(1) - the catalytic core - and CF(0) - the membrane proton channel. CF(1) has five subunits: alpha(3), beta(3), gamma(1), delta(1), epsilon(1). CF(0) has four main subunits: a, b, b' and c.

It localises to the plastid. Its subcellular location is the chloroplast thylakoid membrane. Its function is as follows. Key component of the proton channel; it plays a direct role in the translocation of protons across the membrane. This chain is ATP synthase subunit a, chloroplastic, found in Zea mays (Maize).